We begin with the raw amino-acid sequence, 156 residues long: Snaclec A12 (156 aa).

Residues Met-1–Ala-23 form the signal peptide. Intrachain disulfides connect Cys-27–Cys-38, Cys-55–Cys-148, and Cys-123–Cys-140. Residues Tyr-34–Met-149 enclose the C-type lectin domain.

It belongs to the snaclec family. In terms of assembly, heterodimer; disulfide-linked. Expressed by the venom gland.

It localises to the secreted. In terms of biological role, interferes with one step of hemostasis (modulation of platelet aggregation, or coagulation cascade, for example). The protein is Snaclec A12 of Macrovipera lebetinus (Levantine viper).